The following is a 343-amino-acid chain: Probable transposase for insertion sequence element (343 aa).

Belongs to the transposase mutator family.

In terms of biological role, required for the transposition of the insertion element. The protein is Probable transposase for insertion sequence element of Corynebacterium diphtheriae.